The chain runs to 369 residues: DNA replication and repair protein RecF (369 aa).

ATP is bound at residue Gly30–Thr37.

The protein belongs to the RecF family.

It localises to the cytoplasm. Its function is as follows. The RecF protein is involved in DNA metabolism; it is required for DNA replication and normal SOS inducibility. RecF binds preferentially to single-stranded, linear DNA. It also seems to bind ATP. This chain is DNA replication and repair protein RecF, found in Bacteroides thetaiotaomicron (strain ATCC 29148 / DSM 2079 / JCM 5827 / CCUG 10774 / NCTC 10582 / VPI-5482 / E50).